A 206-amino-acid polypeptide reads, in one-letter code: Small ribosomal subunit protein uS4 (206 aa).

The region spanning 96 to 156 (TRLDNVVYRM…EKSRTQARIK (61 aa)) is the S4 RNA-binding domain.

Belongs to the universal ribosomal protein uS4 family. Part of the 30S ribosomal subunit. Contacts protein S5. The interaction surface between S4 and S5 is involved in control of translational fidelity.

In terms of biological role, one of the primary rRNA binding proteins, it binds directly to 16S rRNA where it nucleates assembly of the body of the 30S subunit. Functionally, with S5 and S12 plays an important role in translational accuracy. This chain is Small ribosomal subunit protein uS4, found in Shewanella sp. (strain ANA-3).